A 210-amino-acid chain; its full sequence is Thiamine-phosphate synthase (210 aa).

4-amino-2-methyl-5-(diphosphooxymethyl)pyrimidine contacts are provided by residues 39-43 (QLREK) and Asn71. Mg(2+)-binding residues include Asp72 and Asp91. Ser110 serves as a coordination point for 4-amino-2-methyl-5-(diphosphooxymethyl)pyrimidine. 2-[(2R,5Z)-2-carboxy-4-methylthiazol-5(2H)-ylidene]ethyl phosphate is bound at residue 134–136 (TPT). Lys137 is a 4-amino-2-methyl-5-(diphosphooxymethyl)pyrimidine binding site. Residue Gly163 coordinates 2-[(2R,5Z)-2-carboxy-4-methylthiazol-5(2H)-ylidene]ethyl phosphate.

The protein belongs to the thiamine-phosphate synthase family. Mg(2+) is required as a cofactor.

The enzyme catalyses 2-[(2R,5Z)-2-carboxy-4-methylthiazol-5(2H)-ylidene]ethyl phosphate + 4-amino-2-methyl-5-(diphosphooxymethyl)pyrimidine + 2 H(+) = thiamine phosphate + CO2 + diphosphate. It carries out the reaction 2-(2-carboxy-4-methylthiazol-5-yl)ethyl phosphate + 4-amino-2-methyl-5-(diphosphooxymethyl)pyrimidine + 2 H(+) = thiamine phosphate + CO2 + diphosphate. It catalyses the reaction 4-methyl-5-(2-phosphooxyethyl)-thiazole + 4-amino-2-methyl-5-(diphosphooxymethyl)pyrimidine + H(+) = thiamine phosphate + diphosphate. Its pathway is cofactor biosynthesis; thiamine diphosphate biosynthesis; thiamine phosphate from 4-amino-2-methyl-5-diphosphomethylpyrimidine and 4-methyl-5-(2-phosphoethyl)-thiazole: step 1/1. Condenses 4-methyl-5-(beta-hydroxyethyl)thiazole monophosphate (THZ-P) and 2-methyl-4-amino-5-hydroxymethyl pyrimidine pyrophosphate (HMP-PP) to form thiamine monophosphate (TMP). This is Thiamine-phosphate synthase from Campylobacter jejuni subsp. jejuni serotype O:2 (strain ATCC 700819 / NCTC 11168).